The chain runs to 270 residues: Phosphatidylglycerol--prolipoprotein diacylglyceryl transferase (270 aa).

7 helical membrane-spanning segments follow: residues 14–34 (VIFE…LLGF), 60–80 (LLFN…VLFY), 95–115 (VWEG…AMLI), 128–148 (ADFV…GNFI), 176–196 (SQLY…NWYI), 202–222 (IGAT…IVEF), and 238–258 (ISMG…IMLV). An a 1,2-diacyl-sn-glycero-3-phospho-(1'-sn-glycerol)-binding site is contributed by Arg143.

This sequence belongs to the Lgt family.

Its subcellular location is the cell inner membrane. The enzyme catalyses L-cysteinyl-[prolipoprotein] + a 1,2-diacyl-sn-glycero-3-phospho-(1'-sn-glycerol) = an S-1,2-diacyl-sn-glyceryl-L-cysteinyl-[prolipoprotein] + sn-glycerol 1-phosphate + H(+). It functions in the pathway protein modification; lipoprotein biosynthesis (diacylglyceryl transfer). In terms of biological role, catalyzes the transfer of the diacylglyceryl group from phosphatidylglycerol to the sulfhydryl group of the N-terminal cysteine of a prolipoprotein, the first step in the formation of mature lipoproteins. The sequence is that of Phosphatidylglycerol--prolipoprotein diacylglyceryl transferase from Pasteurella multocida (strain Pm70).